Reading from the N-terminus, the 102-residue chain is Large ribosomal subunit protein uL24 (102 aa).

The protein belongs to the universal ribosomal protein uL24 family. In terms of assembly, part of the 50S ribosomal subunit.

One of two assembly initiator proteins, it binds directly to the 5'-end of the 23S rRNA, where it nucleates assembly of the 50S subunit. Functionally, one of the proteins that surrounds the polypeptide exit tunnel on the outside of the subunit. This chain is Large ribosomal subunit protein uL24, found in Alkaliphilus oremlandii (strain OhILAs) (Clostridium oremlandii (strain OhILAs)).